The chain runs to 185 residues: Peptidyl-tRNA hydrolase (185 aa).

TRNA is bound at residue Tyr14. Catalysis depends on His19, which acts as the Proton acceptor. 3 residues coordinate tRNA: Tyr65, Asn67, and Asn113.

This sequence belongs to the PTH family. As to quaternary structure, monomer.

It is found in the cytoplasm. It catalyses the reaction an N-acyl-L-alpha-aminoacyl-tRNA + H2O = an N-acyl-L-amino acid + a tRNA + H(+). Hydrolyzes ribosome-free peptidyl-tRNAs (with 1 or more amino acids incorporated), which drop off the ribosome during protein synthesis, or as a result of ribosome stalling. In terms of biological role, catalyzes the release of premature peptidyl moieties from peptidyl-tRNA molecules trapped in stalled 50S ribosomal subunits, and thus maintains levels of free tRNAs and 50S ribosomes. The polypeptide is Peptidyl-tRNA hydrolase (Rickettsia africae (strain ESF-5)).